Here is a 712-residue protein sequence, read N- to C-terminus: MSQEKQVFSIDLAGRQLTVETGQLAKQANGAVLVRYGDTAVLSTATASKEAKNVDFFPLTVNYEERLYAVGKIPGGFIKREGRPSEKAILASRLIDRPIRPLFADGFRNEVQVVSIVMSVDQDCSSEMAAMLGSSLALSISDIPFEGPIAGTTVGRINGEFVINPTVEQQEQSDIHLVVAGTKDAINMVEAGADQVPEETMLEAIMFGHDEIKRLIAFQEEIVQAVGKEKSEVKLYEVDADLNQAVREMAEKDMHSAIQVHEKHAREDAINEVKKRVIEHYEAQEADADTLGQVNEILYKIVKEEVRRLITVEKIRPDGRKGDEIRPLASEVGILSRTHGSGLFTRGQTQALSICTLGALGDVQILDGLGVEESKRFMHHYNFPSFSVGETRPMRGPGRREIGHGALGERALEPVIPSEKDFPYTVRLVSEVLESNGSTSQASICGSTLAMMDAGVPLKAPVAGIAMGLVKTGEHYTILSDIQGMEDHLGDMDFKVAGTAHGVTALQMDIKIDGLSREILEEALQQAKVGRVHILNHMLSVIAEPRTELSAYAPKIITMTINPDKIRDVIGPSGKQINKIIEETGVKIDIEQDGTVFISSINQEMNDKAKKIIEDIVREVQVGEIYEGKVKRVEKFGAFVELFSGKDGLVHISELALERVGKVEDVVKIGDVITVKVIEIDKQGRVNLSRKVLLKEEQEKEAAKEENKQEQQ.

Mg(2+)-binding residues include aspartate 487 and aspartate 493. Positions proline 554–isoleucine 613 constitute a KH domain. An S1 motif domain is found at glycine 623 to lysine 691.

This sequence belongs to the polyribonucleotide nucleotidyltransferase family. Mg(2+) is required as a cofactor.

It localises to the cytoplasm. It catalyses the reaction RNA(n+1) + phosphate = RNA(n) + a ribonucleoside 5'-diphosphate. Functionally, involved in mRNA degradation. Catalyzes the phosphorolysis of single-stranded polyribonucleotides processively in the 3'- to 5'-direction. In Bacillus cereus (strain 03BB102), this protein is Polyribonucleotide nucleotidyltransferase.